The following is a 395-amino-acid chain: Formate-dependent phosphoribosylglycinamide formyltransferase (395 aa).

Residues 22–23 (EL) and glutamate 82 contribute to the N(1)-(5-phospho-beta-D-ribosyl)glycinamide site. ATP contacts are provided by residues arginine 115, lysine 156, 161–166 (SSGKGQ), 196–199 (EGFI), and glutamate 204. Residues 120 to 309 (RLAAETLGLP…EFALHARAIL (190 aa)) enclose the ATP-grasp domain. The Mg(2+) site is built by glutamate 268 and glutamate 280. N(1)-(5-phospho-beta-D-ribosyl)glycinamide contacts are provided by residues aspartate 287, lysine 356, and 363–364 (RR).

It belongs to the PurK/PurT family. In terms of assembly, homodimer.

It catalyses the reaction N(1)-(5-phospho-beta-D-ribosyl)glycinamide + formate + ATP = N(2)-formyl-N(1)-(5-phospho-beta-D-ribosyl)glycinamide + ADP + phosphate + H(+). The protein operates within purine metabolism; IMP biosynthesis via de novo pathway; N(2)-formyl-N(1)-(5-phospho-D-ribosyl)glycinamide from N(1)-(5-phospho-D-ribosyl)glycinamide (formate route): step 1/1. Functionally, involved in the de novo purine biosynthesis. Catalyzes the transfer of formate to 5-phospho-ribosyl-glycinamide (GAR), producing 5-phospho-ribosyl-N-formylglycinamide (FGAR). Formate is provided by PurU via hydrolysis of 10-formyl-tetrahydrofolate. The chain is Formate-dependent phosphoribosylglycinamide formyltransferase from Stenotrophomonas maltophilia (strain K279a).